Reading from the N-terminus, the 437-residue chain is FK506-binding protein 3 (437 aa).

Composition is skewed to acidic residues over residues 73-90, 106-131, and 179-220; these read DIEA…EEEE, EEEE…EDVS, and ADED…DASD. 2 disordered regions span residues 73–132 and 169–349; these read DIEA…DVSE and HLTG…QTAK. 2 stretches are compositionally biased toward basic and acidic residues: residues 256–270 and 292–324; these read KKED…KDLE and AKKE…EASK. In terms of domain architecture, PPIase FKBP-type spans 351-437; it reads GNKVGIRYIG…TFDIKLVSIK (87 aa).

It belongs to the FKBP-type PPIase family. FKBP3/4 subfamily.

The protein resides in the nucleus. The protein localises to the nucleolus. It catalyses the reaction [protein]-peptidylproline (omega=180) = [protein]-peptidylproline (omega=0). Inhibited by both FK506 and rapamycin. PPIases accelerate the folding of proteins. It catalyzes the cis-trans isomerization of proline imidic peptide bonds in oligopeptides. This is FK506-binding protein 3 (FPR3) from Debaryomyces hansenii (strain ATCC 36239 / CBS 767 / BCRC 21394 / JCM 1990 / NBRC 0083 / IGC 2968) (Yeast).